A 284-amino-acid chain; its full sequence is MELFHHIKSVRDALGKARAAGKTVGFVPTMGNLHNAHLALVQQAKQHCDVVIVSIFVNRLQFGLNEDWDKYPRTLQDDAAKLREIGCDYLFCPEEGEVYPNGMDAQTRVIVPSMANVLCGASRPGHFEGVTTVVTKLFNIVQPDIAVFGIKDYQQLAIIRRMVEDLCIPVEIMAGDIVREADGLAMSSRNGFITAQERPRANQLNQSLNWVKQAILDGRRDFDVLESEAKKQIETAGFRPDYLSISNSKTLEPAANDDTDITVLGAMYTEAARLIDNVSLSVVN.

Residue 30–37 (MGNLHNAH) coordinates ATP. Catalysis depends on His-37, which acts as the Proton donor. Gln-61 serves as a coordination point for (R)-pantoate. Gln-61 contributes to the beta-alanine binding site. Residue 149-152 (GIKD) coordinates ATP. Residue Gln-155 participates in (R)-pantoate binding. Residues Val-178 and 186-189 (MSSR) contribute to the ATP site.

This sequence belongs to the pantothenate synthetase family. Homodimer.

Its subcellular location is the cytoplasm. The enzyme catalyses (R)-pantoate + beta-alanine + ATP = (R)-pantothenate + AMP + diphosphate + H(+). The protein operates within cofactor biosynthesis; (R)-pantothenate biosynthesis; (R)-pantothenate from (R)-pantoate and beta-alanine: step 1/1. In terms of biological role, catalyzes the condensation of pantoate with beta-alanine in an ATP-dependent reaction via a pantoyl-adenylate intermediate. This chain is Pantothenate synthetase, found in Saccharophagus degradans (strain 2-40 / ATCC 43961 / DSM 17024).